Reading from the N-terminus, the 297-residue chain is MSLALLQQHSPKIIDGKAIAQSVLEEVKLEVERYKAQGIEPCLAVVLVGEDPASQVYVRNKVQKAAFVGIRSLEFRFDADLSEDELLTQIDRLNTERGVHGILVQLPLPKQINETRVLERIHPQKDVDGFHSENVGGLSQGRDVLTPCTPTGCIRLLKDSLGDDLSGLHAVVIGRSNIVGKPMAALLLKESCTVTVVHSKTRNIEQVCQQADIVVAAVGKANMINASYLKADAVVIDVGINRIMTHEKTRLVGDVDFEDALPMVSAITPVPGGVGPMTIAYLMKNTLQAVRLQHPQI.

Residues 174-176 (GRS), S199, and I240 each bind NADP(+).

Belongs to the tetrahydrofolate dehydrogenase/cyclohydrolase family. Homodimer.

The catalysed reaction is (6R)-5,10-methylene-5,6,7,8-tetrahydrofolate + NADP(+) = (6R)-5,10-methenyltetrahydrofolate + NADPH. It carries out the reaction (6R)-5,10-methenyltetrahydrofolate + H2O = (6R)-10-formyltetrahydrofolate + H(+). Its pathway is one-carbon metabolism; tetrahydrofolate interconversion. Functionally, catalyzes the oxidation of 5,10-methylenetetrahydrofolate to 5,10-methenyltetrahydrofolate and then the hydrolysis of 5,10-methenyltetrahydrofolate to 10-formyltetrahydrofolate. The chain is Bifunctional protein FolD 1 from Acinetobacter baylyi (strain ATCC 33305 / BD413 / ADP1).